The following is a 114-amino-acid chain: Small ribosomal subunit protein uS15 (114 aa).

Belongs to the universal ribosomal protein uS15 family.

In Musca domestica (House fly), this protein is Small ribosomal subunit protein uS15 (RpS13).